We begin with the raw amino-acid sequence, 140 residues long: ATP synthase epsilon chain (140 aa).

It belongs to the ATPase epsilon chain family. As to quaternary structure, F-type ATPases have 2 components, CF(1) - the catalytic core - and CF(0) - the membrane proton channel. CF(1) has five subunits: alpha(3), beta(3), gamma(1), delta(1), epsilon(1). CF(0) has three main subunits: a, b and c.

The protein resides in the cell membrane. Its function is as follows. Produces ATP from ADP in the presence of a proton gradient across the membrane. The sequence is that of ATP synthase epsilon chain from Dehalococcoides mccartyi (strain ATCC BAA-2100 / JCM 16839 / KCTC 5957 / BAV1).